The sequence spans 268 residues: Acyl-CoA-binding domain-containing protein 4 (268 aa).

The region spanning 12–101 is the ACB domain; sequence CQKQFQAAVS…MKLVAQKVID (90 aa). An acyl-CoA-binding positions include 23-32, 43-47, K69, and Y88; these read IQNLPKNGSY and YSYYK. A disordered region spans residues 151-175; it reads AVSEPPCLPKEPAPPSPESHSPRDL. Pro residues predominate over residues 156–167; it reads PCLPKEPAPPSP. Phosphoserine occurs at positions 166 and 171.

Binds medium- and long-chain acyl-CoA esters and may function as an intracellular carrier of acyl-CoA esters. The protein is Acyl-CoA-binding domain-containing protein 4 (ACBD4) of Homo sapiens (Human).